Reading from the N-terminus, the 282-residue chain is 4-hydroxybenzoate octaprenyltransferase (282 aa).

9 helical membrane passes run 17–37 (IGILLLWYPTAWALWMANQGF), 40–60 (IDLLMIFLLGTVFMRSAGCVI), 90–110 (AFILLFILLCASLFLLLKLPI), 113–133 (FYFAVISVLITFLYPFCKRFF), 135–155 (APQLVLGLAFSMGIPMAFIAS), 163–183 (FIVLFLINFSWIIAYDTMYAM), 207–227 (LIIALLLIFLHSLWLVWAINK), 231–251 (CFFYLLWCTAAGILTYQLKLI), and 262–282 (AFLVSGYYGLVMWFAVGLALI).

Belongs to the UbiA prenyltransferase family. The cofactor is Mg(2+).

The protein localises to the cell inner membrane. The enzyme catalyses all-trans-octaprenyl diphosphate + 4-hydroxybenzoate = 4-hydroxy-3-(all-trans-octaprenyl)benzoate + diphosphate. Its pathway is cofactor biosynthesis; ubiquinone biosynthesis. In terms of biological role, catalyzes the prenylation of para-hydroxybenzoate (PHB) with an all-trans polyprenyl group. Mediates the second step in the final reaction sequence of ubiquinone-8 (UQ-8) biosynthesis, which is the condensation of the polyisoprenoid side chain with PHB, generating the first membrane-bound Q intermediate 3-octaprenyl-4-hydroxybenzoate. The protein is 4-hydroxybenzoate octaprenyltransferase of Legionella pneumophila (strain Lens).